Here is a 251-residue protein sequence, read N- to C-terminus: uncharacterized protein (251 aa).

The N-terminal stretch at 1-25 is a signal peptide; it reads MSAGRLNKKSLGIVMLLSVGLLLAG. Cysteine 26 carries N-palmitoyl cysteine lipidation. Cysteine 26 carries S-diacylglycerol cysteine lipidation. The LysM domain maps to 40–84; that stretch reads SVYTVKRGDTLYRISRTTGTSVKELARLNGISPPYTIEVGQKLKL. Residues 93–112 show a composition bias toward low complexity; that stretch reads TRKSTAKSTTKTASVTPSSA. A disordered region spans residues 93 to 115; it reads TRKSTAKSTTKTASVTPSSAVPK.

It belongs to the peptidase M23B family.

It localises to the cell inner membrane. This is an uncharacterized protein from Escherichia coli (strain K12).